We begin with the raw amino-acid sequence, 314 residues long: Aspartate carbamoyltransferase catalytic subunit (314 aa).

Carbamoyl phosphate contacts are provided by arginine 55 and threonine 56. Residue lysine 83 participates in L-aspartate binding. Residues arginine 105, histidine 139, and glutamine 142 each contribute to the carbamoyl phosphate site. Positions 172 and 226 each coordinate L-aspartate. 2 residues coordinate carbamoyl phosphate: glycine 267 and proline 268.

The protein belongs to the aspartate/ornithine carbamoyltransferase superfamily. ATCase family. As to quaternary structure, heterododecamer (2C3:3R2) of six catalytic PyrB chains organized as two trimers (C3), and six regulatory PyrI chains organized as three dimers (R2).

The catalysed reaction is carbamoyl phosphate + L-aspartate = N-carbamoyl-L-aspartate + phosphate + H(+). It functions in the pathway pyrimidine metabolism; UMP biosynthesis via de novo pathway; (S)-dihydroorotate from bicarbonate: step 2/3. Functionally, catalyzes the condensation of carbamoyl phosphate and aspartate to form carbamoyl aspartate and inorganic phosphate, the committed step in the de novo pyrimidine nucleotide biosynthesis pathway. This is Aspartate carbamoyltransferase catalytic subunit from Rhodococcus opacus (strain B4).